The chain runs to 208 residues: Type 3 secretion system stator protein (208 aa).

This sequence belongs to the SctL stator family. The core secretion machinery of the T3SS is composed of approximately 20 different proteins, including cytoplasmic components, a base, an export apparatus and a needle. This subunit is part of the cytosolic complex.

It is found in the cytoplasm. Functionally, component of the type III secretion system (T3SS), also called injectisome, which is used to inject bacterial effector proteins into eukaryotic host cells. Acts as a regulator of the HrcN/SctN ATPase activity. This Sinorhizobium fredii (strain NBRC 101917 / NGR234) protein is Type 3 secretion system stator protein.